The primary structure comprises 303 residues: Inner kinetochore subunit mal2 (303 aa).

It belongs to the CENP-O/MCM21 family. Component of the heterotetrameric kinetochore subcomplex COMA, which consists of fta2, fta7, mal2 and mis17. The COMA subcomplex is part of a larger constitutive centromere-associated network (CCAN) (also known as central kinetochore Sim4 complex in fission yeast), which is composed of at least cnl2, cnp3, cnp20, fta1, fta2, fta3, fta4, fta6, fta7, mal2, mhf1, mhf2, mis6, mis15, mis17, sim4 and wip1.

It is found in the nucleus. Its subcellular location is the chromosome. The protein localises to the centromere. The protein resides in the kinetochore. Component of the kinetochore, a multiprotein complex that assembles on centromeric DNA and attaches chromosomes to spindle microtubules, mediating chromosome segregation and sister chromatid segregation during meiosis and mitosis. Component of the inner kinetochore COMA complex, which connects centromere-associated proteins and the outer kinetochore. COMA interacts with other inner kinetochore proteins to form the inner kinetochore constitutive centromere-associated network (CCAN), which serves as a structural platform for outer kinetochore assembly. The sequence is that of Inner kinetochore subunit mal2 (mal2) from Schizosaccharomyces pombe (strain 972 / ATCC 24843) (Fission yeast).